A 151-amino-acid chain; its full sequence is ADFSDDRITECQEAFELFDRSAEGKVFLGQVGDILRALGQNPTNGDVTKVLGNPPKEELATKQVSFSEFLPMLAQIERQTEHGSYEDFVEGLRVFDKENNGKIMGAELRHVLSTLGEKMSEEEVEESLLQGQQDPNGCIHYEEFSKYLLEG.

A1 is modified (N-acetylalanine). EF-hand domains are found at residues 6 to 41 (DRIT…LGQN), 83 to 118 (GSYE…LGEK), and 119 to 151 (MSEE…LLEG).

In molluscan muscle, calcium regulation is associated with myosin rather than with actin. Muscle myosin contains two types of light chains: the catalytic light chain, essential for ATPase activity, and the regulatory light chain, a calcium-binding protein responsible for Ca(2+) dependent binding and Ca(2+) dependent Mg-ATPase activity. This Halocynthia roretzi (Sea squirt) protein is Myosin catalytic light chain, smooth muscle.